The primary structure comprises 421 residues: Serine hydroxymethyltransferase (421 aa).

Residues Leu-121 and 125-127 (GHL) each bind (6S)-5,6,7,8-tetrahydrofolate. Lys-229 is subject to N6-(pyridoxal phosphate)lysine.

It belongs to the SHMT family. As to quaternary structure, homodimer. Pyridoxal 5'-phosphate is required as a cofactor.

Its subcellular location is the cytoplasm. It catalyses the reaction (6R)-5,10-methylene-5,6,7,8-tetrahydrofolate + glycine + H2O = (6S)-5,6,7,8-tetrahydrofolate + L-serine. It functions in the pathway one-carbon metabolism; tetrahydrofolate interconversion. Its pathway is amino-acid biosynthesis; glycine biosynthesis; glycine from L-serine: step 1/1. Its function is as follows. Catalyzes the reversible interconversion of serine and glycine with tetrahydrofolate (THF) serving as the one-carbon carrier. This reaction serves as the major source of one-carbon groups required for the biosynthesis of purines, thymidylate, methionine, and other important biomolecules. Also exhibits THF-independent aldolase activity toward beta-hydroxyamino acids, producing glycine and aldehydes, via a retro-aldol mechanism. The sequence is that of Serine hydroxymethyltransferase from Actinobacillus pleuropneumoniae serotype 5b (strain L20).